A 450-amino-acid chain; its full sequence is Probable ECA polymerase (450 aa).

11 helical membrane-spanning segments follow: residues 6–26 (FSGL…LTWF), 37–57 (VFFS…TSVL), 63–83 (VGVA…CFYA), 118–138 (VILM…NGFL), 155–175 (GVAL…VYFL), 181–201 (AWLF…MIVG), 207–227 (IIIA…ISLW), 228–248 (MLAA…LKRY), 341–361 (LVVM…GLII), 378–398 (YKAA…IVLA), and 410–430 (VFFI…YWLF).

Belongs to the WzyE family. In terms of assembly, probably part of a complex composed of WzxE, WzyE and WzzE.

Its subcellular location is the cell inner membrane. It functions in the pathway bacterial outer membrane biogenesis; enterobacterial common antigen biosynthesis. Functionally, probably involved in the polymerization of enterobacterial common antigen (ECA) trisaccharide repeat units. This is Probable ECA polymerase from Escherichia coli O17:K52:H18 (strain UMN026 / ExPEC).